Reading from the N-terminus, the 283-residue chain is MMELYIGSHLSTAGGWNALLERSHEEGGTAFAFFPRSPYGKRSKALDPAGAAAFGARLKAEGYGPLVVHAPYVYNLAGKDEAKRTFAIEALAEDIELLTAIREAGQEVYINIHPGAHVGQGTETGCRLISEGLNQVFERTTGVMVLLETMAGKGTECGRNFEELATIMNGVENKANVGVTFDTCHVLDAGYDLVHDYDGVMRQLDEAIGLAEVKAIHVNDSQFGLGSHKDRHANIGQGQLGIPFFTRLVNDPTMAKLPMILETKEQTPTTHRDEIALLRGLVD.

The Zn(2+) site is built by His-69, His-113, Glu-148, Asp-182, His-185, His-217, Asp-230, His-232, and Glu-262.

It belongs to the AP endonuclease 2 family. It depends on Zn(2+) as a cofactor.

The enzyme catalyses Endonucleolytic cleavage to 5'-phosphooligonucleotide end-products.. Endonuclease IV plays a role in DNA repair. It cleaves phosphodiester bonds at apurinic or apyrimidinic (AP) sites, generating a 3'-hydroxyl group and a 5'-terminal sugar phosphate. In Bifidobacterium longum (strain DJO10A), this protein is Probable endonuclease 4.